The chain runs to 473 residues: MAP kinase-activated protein kinase 5 (473 aa).

Residues 22–304 (INWTQKLGAG…IEGVLDHPWL (283 aa)) form the Protein kinase domain. Residues 28 to 36 (LGAGISGPV) and Lys51 each bind ATP. Ser115 bears the Phosphoserine; by PKA mark. Asp148 serves as the catalytic Proton acceptor. At Thr182 the chain carries Phosphothreonine; by MAPK11, MAPK14, MAPK4, MAPK6 and PKA. 2 positions are modified to phosphoserine: Ser212 and Ser354. The stretch at 409-440 (ENEDEKLNEVMQEAWKYNRECKLLRDALQSFS) forms a coiled coil.

Belongs to the protein kinase superfamily. CAMK Ser/Thr protein kinase family. Interacts with SQSTM1. Interacts with ERK3/MAPK6 and ERK4/MAPK4 (via FRIEDE motif); the interaction is direct. Interacts with YWHAE; the interaction prevents phosphorylation of HSP27/HSPB1 leading to disrupt F-actin polymerization. Phosphorylated on Thr-182 ERK3/MAPK6 or ERK4/MAPK4; which is the regulatory phosphorylation site and is located on the T-loop/loop 12, leading to activation. Phosphorylation at Thr-182 by p38-alpha/MAPK14, p38-beta/MAPK11 is subject to debate. Phosphorylated at Ser-115 by PKA/PRKACA, leading to localization to the cytoplasm. Autophosphorylated. In terms of tissue distribution, expressed ubiquitously.

The protein resides in the cytoplasm. It is found in the nucleus. The enzyme catalyses L-seryl-[protein] + ATP = O-phospho-L-seryl-[protein] + ADP + H(+). The catalysed reaction is L-threonyl-[protein] + ATP = O-phospho-L-threonyl-[protein] + ADP + H(+). Activated following phosphorylation at Thr-182 by p38-alpha/MAPK14, p38-beta/MAPK11, ERK2/MAPK1, ERK3/MAPK6, and ERK4/MAPK4. Activated by stress-related extracellular stimuli; such as H(2)O(2), arsenite, anisomycin TNF alpha and also PMA and the calcium ionophore A23187; but to a lesser extent. In vitro, activated by SQSTM1. Inhibited by diterpenoid alkaloid noroxoaconitine. Tumor suppressor serine/threonine-protein kinase involved in mTORC1 signaling and post-transcriptional regulation. Phosphorylates FOXO3, ERK3/MAPK6, ERK4/MAPK4, HSP27/HSPB1, p53/TP53 and RHEB. Acts as a tumor suppressor by mediating Ras-induced senescence and phosphorylating p53/TP53. Involved in post-transcriptional regulation of MYC by mediating phosphorylation of FOXO3: phosphorylation of FOXO3 leads to promote nuclear localization of FOXO3, enabling expression of miR-34b and miR-34c, 2 post-transcriptional regulators of MYC that bind to the 3'UTR of MYC transcript and prevent MYC translation. Acts as a negative regulator of mTORC1 signaling by mediating phosphorylation and inhibition of RHEB. Part of the atypical MAPK signaling via its interaction with ERK3/MAPK6 or ERK4/MAPK4: the precise role of the complex formed with ERK3/MAPK6 or ERK4/MAPK4 is still unclear, but the complex follows a complex set of phosphorylation events: upon interaction with atypical MAPK (ERK3/MAPK6 or ERK4/MAPK4), ERK3/MAPK6 (or ERK4/MAPK4) is phosphorylated and then mediates phosphorylation and activation of MAPKAPK5, which in turn phosphorylates ERK3/MAPK6 (or ERK4/MAPK4). Mediates phosphorylation of HSP27/HSPB1 in response to PKA/PRKACA stimulation, inducing F-actin rearrangement. This chain is MAP kinase-activated protein kinase 5 (Mapkapk5), found in Mus musculus (Mouse).